A 424-amino-acid polypeptide reads, in one-letter code: Probable aminotransferase TAT4 (424 aa).

It belongs to the class-I pyridoxal-phosphate-dependent aminotransferase family. Pyridoxal 5'-phosphate serves as cofactor.

The chain is Probable aminotransferase TAT4 from Arabidopsis thaliana (Mouse-ear cress).